A 110-amino-acid polypeptide reads, in one-letter code: Small ribosomal subunit protein bS6 (110 aa).

This sequence belongs to the bacterial ribosomal protein bS6 family.

Functionally, binds together with bS18 to 16S ribosomal RNA. The sequence is that of Small ribosomal subunit protein bS6 (rpsF) from Aquifex aeolicus (strain VF5).